The following is a 748-amino-acid chain: Structure-specific endonuclease subunit SLX4 (748 aa).

The tract at residues 50-102 is disordered; that stretch reads LSSDDDSISTQVKSVTAQKSPITQETTKNDTERNKDVDKSCNPVSTSQPDLGE. A compositionally biased stretch (polar residues) spans 57 to 75; that stretch reads ISTQVKSVTAQKSPITQET. At Thr-72 the chain carries Phosphothreonine; by ATR and ATM. The segment covering 76 to 88 has biased composition (basic and acidic residues); sequence TKNDTERNKDVDK. Residue Thr-113 is modified to Phosphothreonine; by ATR and ATM. 2 disordered regions span residues 215–236 and 277–303; these read IKTQ…KGEK and EKSS…PPEL. The span at 222 to 236 shows a compositional bias: basic and acidic residues; that stretch reads NSDKPPRARNNKGEK. The span at 277–291 shows a compositional bias: low complexity; sequence EKSSSSLDNQESSQQ. Ser-289 is subject to Phosphoserine; by ATR and ATM. Thr-319 carries the post-translational modification Phosphothreonine; by ATR and ATM. Phosphoserine; by ATR and ATM occurs at positions 329 and 355.

This sequence belongs to the SLX4 family. In terms of assembly, forms a heterodimer with SLX1. Interacts with RAD1; catalytic subunit of the RAD1-RAD10 endonuclease. Interacts with RTT107. Phosphorylated by ATR (MEC1) and ATM (TEL1) upon DNA damage. This appears to be required for the function with the RAD1-RAD10 endonuclease.

The protein resides in the nucleus. Its subcellular location is the cytoplasm. Regulatory subunit that interacts with and increases the activity of different structure-specific endonucleases. Has several distinct roles in protecting genome stability by resolving diverse forms of deleterious DNA structures. Component of the SLX1-SLX4 structure-specific endonuclease that resolves DNA secondary structures generated during DNA repair and recombination. Has endonuclease activity towards branched DNA substrates, introducing single-strand cuts in duplex DNA close to junctions with ss-DNA. Has a preference for simple Y, 5'-flap and replication fork-like structures. It cleaves the strand bearing the 5'-non-homologous arm at the branch site junction and generates ligatable, nicked products from the 5'-flap or replication fork substrates. Plays a critical role in maintaining the integrity of the ribosomal DNA (rDNA) loci, where it has a role in re-starting stalled replication forks. Has Holliday junction resolvase activity in vitro. Interacts with the structure-specific RAD1-RAD10 endonuclease and promotes RAD1-RAD10-dependent 3'-non-homologous tail removal (NHTR) during repair of double-strand breaks by single-strand annealing. SLX4 also promotes recovery from DNA-alkylation-induced replisome stalling during DNA replication by facilitating the error-free mode of lesion bypass. This does not require SLX1 or RAD1-RAD10, but probably RTT107. This Saccharomyces cerevisiae (strain YJM789) (Baker's yeast) protein is Structure-specific endonuclease subunit SLX4.